We begin with the raw amino-acid sequence, 605 residues long: Poly(3-hydroxyalkanoate) polymerase (605 aa).

The 209-residue stretch at 319-527 folds into the AB hydrolase-1 domain; that stretch reads IETAIDMIGV…VLAGSGHIAG (209 aa). Cys-341 is an active-site residue.

It belongs to the PHA/PHB synthase family.

Its subcellular location is the cytoplasm. The polypeptide is Poly(3-hydroxyalkanoate) polymerase (phaC) (Methylorubrum extorquens (Methylobacterium dichloromethanicum)).